Reading from the N-terminus, the 78-residue chain is D-alanyl carrier protein (78 aa).

Residues Met-1–Lys-78 enclose the Carrier domain. Ser-36 bears the O-(pantetheine 4'-phosphoryl)serine mark.

It belongs to the DltC family. 4'-phosphopantetheine is transferred from CoA to a specific serine of apo-DCP.

The protein resides in the cytoplasm. It functions in the pathway cell wall biogenesis; lipoteichoic acid biosynthesis. Functionally, carrier protein involved in the D-alanylation of lipoteichoic acid (LTA). The loading of thioester-linked D-alanine onto DltC is catalyzed by D-alanine--D-alanyl carrier protein ligase DltA. The DltC-carried D-alanyl group is further transferred to cell membrane phosphatidylglycerol (PG) by forming an ester bond, probably catalyzed by DltD. D-alanylation of LTA plays an important role in modulating the properties of the cell wall in Gram-positive bacteria, influencing the net charge of the cell wall. This chain is D-alanyl carrier protein, found in Staphylococcus carnosus (strain TM300).